Consider the following 244-residue polypeptide: Tyrosine recombinase XerD-like (244 aa).

Residues 1–73 (MRDRISAFLE…ACNQFLYFLY (73 aa)) enclose the Core-binding (CB) domain. The 155-residue stretch at 90–244 (AEKKTEKPEI…KTVLTLEKYR (155 aa)) folds into the Tyr recombinase domain. Catalysis depends on residues K150 and R211. The active-site O-(3'-phospho-DNA)-tyrosine intermediate is Y243.

This sequence belongs to the 'phage' integrase family. XerD-like subfamily.

The protein resides in the cytoplasm. Functionally, putative tyrosine recombinase. Not involved in the cutting and rejoining of the recombining DNA molecules on dif(SL) site. This is Tyrosine recombinase XerD-like from Streptococcus pneumoniae (strain Hungary19A-6).